The chain runs to 842 residues: Protein P (842 aa).

The interval 1-177 (MPLSYQHFRR…FCGSPYSWEQ (177 aa)) is terminal protein domain (TP). The interval 178–345 (ELHHGAFLDG…YCLSHLVNLL (168 aa)) is spacer. Positions 186 to 273 (DGPSRMGEES…AKNIASRSAS (88 aa)) are disordered. Over residues 223–239 (GPQSQQRPLDRSQQGRS) the composition is skewed to polar residues. Positions 346–689 (EDWGPCTEHG…YLNLYPVARQ (344 aa)) are polymerase/reverse transcriptase domain (RT). Positions 356 to 599 (RHHIRIPRTP…YSLNFMGYVI (244 aa)) constitute a Reverse transcriptase domain. Mg(2+)-binding residues include D428, D550, and D551.

This sequence belongs to the hepadnaviridae P protein family.

The enzyme catalyses DNA(n) + a 2'-deoxyribonucleoside 5'-triphosphate = DNA(n+1) + diphosphate. It carries out the reaction Endonucleolytic cleavage to 5'-phosphomonoester.. Activated by host HSP70 and HSP40 in vitro to be able to bind the epsilon loop of the pgRNA. Because deletion of the RNase H region renders the protein partly chaperone-independent, the chaperones may be needed indirectly to relieve occlusion of the RNA-binding site by this domain. Inhibited by several reverse-transcriptase inhibitors: Lamivudine, Adefovir and Entecavir. In terms of biological role, multifunctional enzyme that converts the viral RNA genome into dsDNA in viral cytoplasmic capsids. This enzyme displays a DNA polymerase activity that can copy either DNA or RNA templates, and a ribonuclease H (RNase H) activity that cleaves the RNA strand of RNA-DNA heteroduplexes in a partially processive 3'- to 5'-endonucleasic mode. Neo-synthesized pregenomic RNA (pgRNA) are encapsidated together with the P protein, and reverse-transcribed inside the nucleocapsid. Initiation of reverse-transcription occurs first by binding the epsilon loop on the pgRNA genome, and is initiated by protein priming, thereby the 5'-end of (-)DNA is covalently linked to P protein. Partial (+)DNA is synthesized from the (-)DNA template and generates the relaxed circular DNA (RC-DNA) genome. After budding and infection, the RC-DNA migrates in the nucleus, and is converted into a plasmid-like covalently closed circular DNA (cccDNA). The activity of P protein does not seem to be necessary for cccDNA generation, and is presumably released from (+)DNA by host nuclear DNA repair machinery. The protein is Protein P of Homo sapiens (Human).